Consider the following 433-residue polypeptide: Mitochondrial distribution and morphology protein 12 (433 aa).

The region spanning 1-433 (MSIDIDWERA…VYPSFWTFLI (433 aa)) is the SMP-LTD domain. Disordered regions lie at residues 62–113 (LSDP…GGQM), 180–279 (TPLG…RMRE), and 356–376 (GPET…SPRR). The span at 81-96 (SEERSPTREPVDRYGN) shows a compositional bias: basic and acidic residues. The span at 214–236 (SAQSRPSTANTGNTLPSRDSMSV) shows a compositional bias: polar residues. Basic and acidic residues predominate over residues 268-279 (PLDDTPPRRMRE).

Belongs to the MDM12 family. As to quaternary structure, component of the ER-mitochondria encounter structure (ERMES) or MDM complex, composed of MMM1, MDM10, MDM12 and MDM34. An MMM1 homodimer associates with one molecule of MDM12 on each side in a pairwise head-to-tail manner, and the SMP-LTD domains of MMM1 and MDM12 generate a continuous hydrophobic tunnel for phospholipid trafficking.

It localises to the mitochondrion outer membrane. It is found in the endoplasmic reticulum membrane. Functionally, component of the ERMES/MDM complex, which serves as a molecular tether to connect the endoplasmic reticulum (ER) and mitochondria. Components of this complex are involved in the control of mitochondrial shape and protein biogenesis, and function in nonvesicular lipid trafficking between the ER and mitochondria. MDM12 is required for the interaction of the ER-resident membrane protein MMM1 and the outer mitochondrial membrane-resident beta-barrel protein MDM10. The MDM12-MMM1 subcomplex functions in the major beta-barrel assembly pathway that is responsible for biogenesis of all mitochondrial outer membrane beta-barrel proteins, and acts in a late step after the SAM complex. The MDM10-MDM12-MMM1 subcomplex further acts in the TOM40-specific pathway after the action of the MDM12-MMM1 complex. Essential for establishing and maintaining the structure of mitochondria and maintenance of mtDNA nucleoids. The protein is Mitochondrial distribution and morphology protein 12 of Ajellomyces capsulatus (strain NAm1 / WU24) (Darling's disease fungus).